A 475-amino-acid polypeptide reads, in one-letter code: RNA pseudouridine synthase 3, mitochondrial (475 aa).

A mitochondrion-targeting transit peptide spans 1 to 15 (MLCRRRRVGAAVRWL). Residues 40 to 74 (RLGKPKPGPRPRQLLSLPPFPGGGDGDPLPGRKAA) form a disordered region. Residues 90–160 (ADVPQEVVQA…GEIKKRYETI (71 aa)) form the S4 RNA-binding domain. Asp-230 is a catalytic residue.

Belongs to the pseudouridine synthase RluA family.

It is found in the mitochondrion. The enzyme catalyses a uridine in RNA = a pseudouridine in RNA. This Oryza sativa subsp. japonica (Rice) protein is RNA pseudouridine synthase 3, mitochondrial.